A 155-amino-acid polypeptide reads, in one-letter code: Endoribonuclease YbeY (155 aa).

Zn(2+) is bound by residues H114, H118, and H124.

This sequence belongs to the endoribonuclease YbeY family. Zn(2+) serves as cofactor.

It is found in the cytoplasm. In terms of biological role, single strand-specific metallo-endoribonuclease involved in late-stage 70S ribosome quality control and in maturation of the 3' terminus of the 16S rRNA. This chain is Endoribonuclease YbeY, found in Escherichia coli O7:K1 (strain IAI39 / ExPEC).